We begin with the raw amino-acid sequence, 587 residues long: Leucine-rich repeat-containing protein 63 (587 aa).

7 LRR repeats span residues 251–274 (QSVI…IPPR), 344–367 (AFQL…ILCL), 368–390 (KNLQ…IQQL), 392–413 (FLRI…LFSL), 414–436 (SYLE…IQKL), 437–459 (RSLE…ILKL), and 487–510 (LTQI…IPVE).

The polypeptide is Leucine-rich repeat-containing protein 63 (LRRC63) (Homo sapiens (Human)).